The chain runs to 224 residues: MGRGRYPARLYVTAPPPEIAARYYRSWPAKELYHTPEHFPPVSAEGLFGYNAPLTLEFGCATGEYLCALAAAQPSSCFVGIDIVAKPLYRAVERAVAGNLSNILFIHADARLIYQRIPTAALHSIILHFPPPLLRNRQRNQLLVSPQLLECAARTLVPGGYLSFLTDHPALFALMQELLPAFPALRATPASVEELAVFESHYHRRWAARGRTISGLRIERVMED.

3 residues coordinate S-adenosyl-L-methionine: glutamate 57, aspartate 82, and aspartate 109. Substrate is bound at residue aspartate 167.

The protein belongs to the class I-like SAM-binding methyltransferase superfamily. TrmB family.

The enzyme catalyses guanosine(46) in tRNA + S-adenosyl-L-methionine = N(7)-methylguanosine(46) in tRNA + S-adenosyl-L-homocysteine. It participates in tRNA modification; N(7)-methylguanine-tRNA biosynthesis. In terms of biological role, catalyzes the formation of N(7)-methylguanine at position 46 (m7G46) in tRNA. This chain is tRNA (guanine-N(7)-)-methyltransferase, found in Chloroflexus aurantiacus (strain ATCC 29366 / DSM 635 / J-10-fl).